The chain runs to 1222 residues: MLVGQGAGPLGPAVVTAAVVLLLSGVGPAHGSEDIVVGCGGFVKSDVEINYSLIEIKLYTKHGTLKYQTDCAPNNGYFMIPLYDKGDFILKIEPPLGWSFEPTTVELHVDGVSDICTKGGDINFVFTGFSVNGKVLSKGQPLGPAGVQVSLRNTGTEAKIQSTVTQPGGKFAFFKVLPGDYEILATHPTWALKEASTTVRVTNSNANAASPLIVAGYNVSGSVRSDGEPMKGVKFLLFSSLVTKEDVLGCNVSPVPGFQPQDESLVYLCYTVSREDGSFSFYSLPSGGYTVIPFYRGERITFDVAPSRLDFTVEHDSLKIEPVFHVMGFSVTGRVLNGPEGDGVPEAVVTLNNQIKVKTKADGSFRLENITTGTYTIHAQKEHLYFETVTIKIAPNTPQLADIIATGFSVCGQISIIRFPDTVKQMNKYKVVLSSQDKDKSLVTVETDAHGSFCFKAKPGTYKVQVMVPEAETRAGLTLKPQTFPLTVTNRPMMDVAFVQFLASVSGKVSCLDTCGDLLVTLQSLSRQGEKRSLQLSGKVNAMTFTFDNVLPGKYKISIMHEDWCWKNKSLEVEVLEDDMSAVEFRQTGYMLRCSLSHAITLEFYQDGNGRENVGIYNLSKGVNRFCLSKPGVYKVTPRSCHRFEQAFYTYDTSSPSILTLTAIRHHVLGTITTDKMMDVTVTIKSSIDSEPALVLGPLKSVQELRREQQLAEIEARRQEREKNGNEEGEERMTKPPVQEMVDELQGPFSYDFSYWARSGEKITVTPSSKELLFYPPSMEAVVSGESCPGKLIEIHGKAGLFLEGQIHPELEGVEIVISEKGASSPLITVFTDDKGAYSVGPLHSDLEYTVTSQKEGYVLTAVEGTIGDFKAYALAGVSFEIKAEDDQPLPGVLLSLSGGLFRSNLLTQDNGILTFSNLSPGQYYFKPMMKEFRFEPSSQMIEVQEGQNLKITITGYRTAYSCYGTVSSLNGEPEQGVAMEAVGQNDCSIYGEDTVTDEEGKFRLRGLLPGCVYHVQLKAEGNDHIERALPHHRVIEVGNNDIDDVNIIVFRQINQFDLSGNVITSSEYLPTLWVKLYKSENLDNPIQTVSLGQSLFFHFPPLLRDGENYVVLLDSTLPRSQYDYILPQVSFTAVGYHKHITLIFNPTRKLPEQDIAQGSYIALPLTLLVLLAGYNHDKLIPLLLQLTSRLQGVRALGQAASDNSGPEDAKRQAKKQKTRRT.

The first 31 residues, Met1 to Gly31, serve as a signal peptide directing secretion. Residues Ser32–Asp1155 are Extracellular-facing. Residues Asn50, Asn218, and Asn618 are each glycosylated (N-linked (GlcNAc...) asparagine). The helical transmembrane segment at Ile1156–Asn1176 threads the bilayer. The Cytoplasmic portion of the chain corresponds to His1177–Thr1222. Positions Gly1198–Thr1222 are disordered. Ser1205 carries the post-translational modification Phosphoserine. Over residues Gln1213–Thr1222 the composition is skewed to basic residues.

As to quaternary structure, component of the back of Sec61 (BOS) complex, composed of NCLN/Nicalin, NOMO (NOMO1, NOMO2 or NOMO3) and TMEM147. The BOS complex is part of the multi-pass translocon (MPT) complex, composed of three subcomplexes, the GEL complex (composed of RAB5IF/OPTI and TMCO1), the BOS complex (composed of NCLN/Nicalin, NOMO and TMEM147) and the PAT complex (composed of WDR83OS/Asterix and CCDC47). The MPT complex associates with the SEC61 complex. Due to the strong similarity between NOMO1, NOMO2 and NOMO3, similar interaction pattern probably occur for the three gene copies. As to expression, expressed in colon tumor tissue and in adjacent normal colonic mucosa.

It localises to the endoplasmic reticulum membrane. Component of the multi-pass translocon (MPT) complex that mediates insertion of multi-pass membrane proteins into the lipid bilayer of membranes. The MPT complex takes over after the SEC61 complex: following membrane insertion of the first few transmembrane segments of proteins by the SEC61 complex, the MPT complex occludes the lateral gate of the SEC61 complex to promote insertion of subsequent transmembrane regions. The protein is BOS complex subunit NOMO1 (NOMO1) of Homo sapiens (Human).